We begin with the raw amino-acid sequence, 397 residues long: Succinyl-diaminopimelate desuccinylase (397 aa).

His73 lines the Zn(2+) pocket. Residue Asp75 is part of the active site. Asp106 contributes to the Zn(2+) binding site. The Proton acceptor role is filled by Glu140. Glu141, Glu169, and His366 together coordinate Zn(2+).

It belongs to the peptidase M20A family. DapE subfamily. Homodimer. Zn(2+) is required as a cofactor. The cofactor is Co(2+).

The enzyme catalyses N-succinyl-(2S,6S)-2,6-diaminopimelate + H2O = (2S,6S)-2,6-diaminopimelate + succinate. It participates in amino-acid biosynthesis; L-lysine biosynthesis via DAP pathway; LL-2,6-diaminopimelate from (S)-tetrahydrodipicolinate (succinylase route): step 3/3. Catalyzes the hydrolysis of N-succinyl-L,L-diaminopimelic acid (SDAP), forming succinate and LL-2,6-diaminopimelate (DAP), an intermediate involved in the bacterial biosynthesis of lysine and meso-diaminopimelic acid, an essential component of bacterial cell walls. This chain is Succinyl-diaminopimelate desuccinylase, found in Rhizobium johnstonii (strain DSM 114642 / LMG 32736 / 3841) (Rhizobium leguminosarum bv. viciae).